The following is a 335-amino-acid chain: Mesoderm-specific transcript homolog protein (335 aa).

A run of 2 helical transmembrane segments spans residues 13–33 (WWVQ…HIPP) and 63–83 (VGVV…TSSY). Residues 71–310 (IVVLLHGFPT…PRSTVSILDD (240 aa)) form the AB hydrolase-1 domain. Positions 98–103 (RVIALD) match the RVIALD motif. N-linked (GlcNAc...) asparagine glycosylation is present at N163. A helical membrane pass occupies residues 266–286 (VGALASVTIPIHFIYGPLDPV).

This sequence belongs to the AB hydrolase superfamily. Highly expressed in hydatidiform moles, but barely expressed in dermoid cysts. Biallelic expression is detected in blood lymphocytes. Seems to imprinted in an isoform-specific manner rather than in a tissue-specific manner in lymphocytes. Isoform 1 is expressed only from the paternal allele. Isoform 2 is expressed from both the paternal allele and the maternal allele.

It is found in the endoplasmic reticulum membrane. This chain is Mesoderm-specific transcript homolog protein (MEST), found in Homo sapiens (Human).